The following is a 296-amino-acid chain: Elongation factor Ts (296 aa).

The involved in Mg(2+) ion dislocation from EF-Tu stretch occupies residues 82–85; that stretch reads TDFV.

This sequence belongs to the EF-Ts family.

The protein resides in the cytoplasm. Associates with the EF-Tu.GDP complex and induces the exchange of GDP to GTP. It remains bound to the aminoacyl-tRNA.EF-Tu.GTP complex up to the GTP hydrolysis stage on the ribosome. The chain is Elongation factor Ts from Aromatoleum aromaticum (strain DSM 19018 / LMG 30748 / EbN1) (Azoarcus sp. (strain EbN1)).